A 220-amino-acid chain; its full sequence is Probable N-acetyl-alpha-D-glucosaminyl L-malate deacetylase 2 (220 aa).

Residues histidine 11, aspartate 14, and histidine 125 each coordinate Zn(2+).

Belongs to the PIGL family. It depends on Zn(2+) as a cofactor.

The catalysed reaction is (S)-malyl N-acetyl-alpha-D-glucosaminide + H2O = (S)-malyl alpha-D-glucosaminide + acetate. Its function is as follows. Involved in bacillithiol (BSH) biosynthesis. Catalyzes the second step of the pathway, the deacetylation of N-acetylglucosaminylmalate (GlcNAc-Mal) to glucosamine malate (GlcN-Mal). Has weak activity compared with bshB1. The chain is Probable N-acetyl-alpha-D-glucosaminyl L-malate deacetylase 2 from Bacillus cereus (strain ATCC 14579 / DSM 31 / CCUG 7414 / JCM 2152 / NBRC 15305 / NCIMB 9373 / NCTC 2599 / NRRL B-3711).